Consider the following 418-residue polypeptide: FXa-directed anticoagulant (418 aa).

The signal sequence occupies residues 1-19 (MNLKIAIIVICQLVYFTQG). 3 N-linked (GlcNAc...) asparagine glycosylation sites follow: Asn117, Asn167, and Asn286.

The protein belongs to the serpin family. Interacts with host coagulation factor X/F10 (activated). In terms of tissue distribution, female salivary gland (at protein level).

Its subcellular location is the secreted. Anticoagulant and antithrombotic serpin-type protein inhibiting host coagulation factor Xa (F10). Does not inhibit host uPA/urokinase-type plasminogen activator (PLAU), kallikrein, granzyme B (GZMB), matriptase, elastase, alpha-chymotrypsin, chymase, coagulation factor XIIa (F12), coagulation factor XIa (F11), plasmin (PLG), thrombin (F2), trypsin and cathepsin G (CTSG). Inhibits factor Xa-induced production of pro-inflammatory cytokines, such as MCP-1/CCL2, TNF-alpha/TNF, IL-1beta/IL1B, IL6, IL8/CXCL8 and IL18, in human endothelial cells. Inhibits factor Xa-induced up-regulation of protease-activated receptors (PARs) F2R, F2RL1 and F2RL2 in human endothelial cells. Prevents activation of host F2RL1 via inhibition of F2RL1 cleavage by host factor Xa. Inhibits factor Xa-induced up-regulation of adhesion molecules ICAM1 and VCAM1 in human endothelial cells. Inhibits factor Xa-induced up-regulation of phosphorylated ERK1/2 in human endothelial cells. Inhibits factor Xa-induced activation of transcription factor NF-kappa-B in human endothelial cells. Reduces factor Xa-induced edema in the host. Reduces factor Xa-induced endothelial permeability in the host. The polypeptide is FXa-directed anticoagulant (Aedes albopictus (Asian tiger mosquito)).